A 275-amino-acid polypeptide reads, in one-letter code: Myb/SANT-like DNA-binding domain-containing protein 3 (275 aa).

The Myb-like domain occupies 13–78 (FSELEKSILL…QLKKCWENIK (66 aa)). Residues S96 and S98 each carry the phosphoserine modification. K154 is covalently cross-linked (Glycyl lysine isopeptide (Lys-Gly) (interchain with G-Cter in SUMO2)). The stretch at 211–247 (QLIQMNEVHVAKIQQIERECEMAEEEHRIKMEVLNKK) forms a coiled coil. Residue S274 is modified to Phosphoserine.

It belongs to the MSANTD3 family. In terms of tissue distribution, expressed in brain.

In Homo sapiens (Human), this protein is Myb/SANT-like DNA-binding domain-containing protein 3 (MSANTD3).